A 146-amino-acid chain; its full sequence is Cytochrome c-type biogenesis protein CcmE (146 aa).

Residues 1–7 are Cytoplasmic-facing; that stretch reads MQAKHQR. The chain crosses the membrane as a helical; Signal-anchor for type II membrane protein span at residues 8–28; it reads LILGIIALAAVIAAGFLALVA. The Periplasmic portion of the chain corresponds to 29–146; sequence FKKQAAYFFT…AATQTTLQEK (118 aa). The heme site is built by His-123 and Tyr-127.

Belongs to the CcmE/CycJ family.

The protein localises to the cell inner membrane. Its function is as follows. Heme chaperone required for the biogenesis of c-type cytochromes. Transiently binds heme delivered by CcmC and transfers the heme to apo-cytochromes in a process facilitated by CcmF and CcmH. This chain is Cytochrome c-type biogenesis protein CcmE, found in Zymomonas mobilis subsp. mobilis (strain ATCC 31821 / ZM4 / CP4).